Reading from the N-terminus, the 725-residue chain is MLEMYINNNNTEFQKQQLWTAIVQAKQDGLSNEEIIENVQEALPDAMVFYAETVLKQIDFRAKLSRPVVEFNLEFLFQVIYESVIAGTNDNEILSICAEHCTLNQYEFVRYALEYIHLHRMPSQWEQNNVYQKMIEIVSSSPIESLFEYIESIKNIYLKQIGYELVQENLYNLLLNNKPISYFTDLANQSKDKFIKNYCCRTAVLVARATGKPLDLKVTGDGSIILKETKYLNSEIANNGIVSSNILTMGQAGKLLVDTLEDFNINAKYVDAKNGPTFNRIRVKLERGVSYKKVEDIGNDLVQQLGEELGLKVAPMVSVVPGGVVFDIPRLDRQFAYFRDYFSFDGEPDIYSVSIPGGVDVDGTYVEIPLYSDNVTHILGGGRTRGGKSQFEKAAILYLVRRYPPSVVRLALSDVKRVTFGKFDGLPHLVAPVARDAESTANLLDYLVEEMELRYQEFERHSSIETIAQYNSRFAPDCIMPRVICLIDECFDLLSDDNYCDRIETALMKLLAKAGGAGIHVLLYTQRPDKNVIDPLIRSNFPAKTAFVTTRPEDSCIILGDDKDKRAVYLLGYGDFLYKTTEVLRLQALYVADDEDPEYFQQLLLEAKNQNDPYTAWKSGLDFDEFVASLYDESSSNDNGKFKATTATKTKQSKTDFEGSFSFKVQLDEEARNSIMNLHQKGYQLDEIVKAVFNLSRQDGRSYKKFRNVVEEFLNNFKGGGEDDI.

The FtsK domain maps to 363–556 (GTYVEIPLYS…FVTTRPEDSC (194 aa)). Position 382–389 (382–389 (GRTRGGKS)) interacts with ATP.

The protein belongs to the FtsK/SpoIIIE/SftA family.

In terms of biological role, probable DNA motor protein. May track DNA in a ATP-dependent manner by generating positive supercoils in front of it and negative supercoils behind it. This is an uncharacterized protein from Nostoc sp. (strain PCC 7120 / SAG 25.82 / UTEX 2576).